The sequence spans 352 residues: Thiamine-phosphate synthase (352 aa).

Residues 1–128 (MNPTPSETSL…AAEAAAIRYG (128 aa)) are unknown. Residues 63–85 (SYKQARSTSTDTGAGLKHPAQLD) are disordered. A thiamine-phosphate synthase region spans residues 129-352 (LYDLEVTCLN…LLQQLDQATI (224 aa)). 4-amino-2-methyl-5-(diphosphooxymethyl)pyrimidine contacts are provided by residues 180–184 (QYRCK) and asparagine 212. Mg(2+) is bound by residues aspartate 213 and aspartate 232. Serine 251 and lysine 280 together coordinate 4-amino-2-methyl-5-(diphosphooxymethyl)pyrimidine. A 2-[(2R,5Z)-2-carboxy-4-methylthiazol-5(2H)-ylidene]ethyl phosphate-binding site is contributed by glycine 307.

It belongs to the thiamine-phosphate synthase family. Mg(2+) serves as cofactor.

It carries out the reaction 2-[(2R,5Z)-2-carboxy-4-methylthiazol-5(2H)-ylidene]ethyl phosphate + 4-amino-2-methyl-5-(diphosphooxymethyl)pyrimidine + 2 H(+) = thiamine phosphate + CO2 + diphosphate. The catalysed reaction is 2-(2-carboxy-4-methylthiazol-5-yl)ethyl phosphate + 4-amino-2-methyl-5-(diphosphooxymethyl)pyrimidine + 2 H(+) = thiamine phosphate + CO2 + diphosphate. It catalyses the reaction 4-methyl-5-(2-phosphooxyethyl)-thiazole + 4-amino-2-methyl-5-(diphosphooxymethyl)pyrimidine + H(+) = thiamine phosphate + diphosphate. The protein operates within cofactor biosynthesis; thiamine diphosphate biosynthesis; thiamine phosphate from 4-amino-2-methyl-5-diphosphomethylpyrimidine and 4-methyl-5-(2-phosphoethyl)-thiazole: step 1/1. Functionally, condenses 4-methyl-5-(beta-hydroxyethyl)thiazole monophosphate (THZ-P) and 2-methyl-4-amino-5-hydroxymethyl pyrimidine pyrophosphate (HMP-PP) to form thiamine monophosphate (TMP). This Synechococcus sp. (strain CC9605) protein is Thiamine-phosphate synthase.